The primary structure comprises 515 residues: Galactose-1-phosphate uridylyltransferase (515 aa).

It belongs to the galactose-1-phosphate uridylyltransferase type 2 family.

It is found in the cytoplasm. It catalyses the reaction alpha-D-galactose 1-phosphate + UDP-alpha-D-glucose = alpha-D-glucose 1-phosphate + UDP-alpha-D-galactose. Its pathway is carbohydrate metabolism; galactose metabolism. Its function is as follows. Transfers the UMP unit from UDP-glucose (UDP-Glc) to Gal1P. Can also transfer the UMP unit to GlcNAc1P and GalNAc1P. Involved in the general galactose metabolism, and also involved in the lacto-N-biose I/galacto-N-biose (LNB/GNB) degradation pathway, which is important for host intestinal colonization by bifidobacteria. The chain is Galactose-1-phosphate uridylyltransferase from Bifidobacterium longum subsp. longum (strain ATCC 15707 / DSM 20219 / JCM 1217 / NCTC 11818 / E194b).